We begin with the raw amino-acid sequence, 446 residues long: Tubulin beta-2 chain (446 aa).

Positions 11, 69, 138, 142, 143, 144, 204, and 226 each coordinate GTP. Mg(2+) is bound at residue E69. Positions 426-446 are disordered; it reads QEAGIDEEEEYEEEAPAEHEE. Residues 429–440 show a composition bias toward acidic residues; it reads GIDEEEEYEEEA.

The protein belongs to the tubulin family. As to quaternary structure, dimer of alpha and beta chains. A typical microtubule is a hollow water-filled tube with an outer diameter of 25 nm and an inner diameter of 15 nM. Alpha-beta heterodimers associate head-to-tail to form protofilaments running lengthwise along the microtubule wall with the beta-tubulin subunit facing the microtubule plus end conferring a structural polarity. Microtubules usually have 13 protofilaments but different protofilament numbers can be found in some organisms and specialized cells. It depends on Mg(2+) as a cofactor.

It is found in the cytoplasm. It localises to the cytoskeleton. In terms of biological role, tubulin is the major constituent of microtubules, a cylinder consisting of laterally associated linear protofilaments composed of alpha- and beta-tubulin heterodimers. Microtubules grow by the addition of GTP-tubulin dimers to the microtubule end, where a stabilizing cap forms. Below the cap, tubulin dimers are in GDP-bound state, owing to GTPase activity of alpha-tubulin. In Hypocrea virens (Gliocladium virens), this protein is Tubulin beta-2 chain.